The primary structure comprises 512 residues: Serine--tRNA ligase, cytoplasmic (512 aa).

M1 is modified (N-acetylmethionine). Positions 9–61 (RVDKGGDPALIRETQEKRFKDPGLVDQLVKADSEWRRCRFRADNLNKLKNLCS) are interaction with tRNA. Position 241 is a phosphoserine (S241). 2 residues coordinate L-serine: T271 and R302. Residues 302-304 (RQE) and 318-321 (VHQF) contribute to the ATP site. Residue K323 is modified to N6-acetyllysine. E325 is a binding site for L-serine. 391–394 (ELVS) contributes to the ATP binding site. Residues N427 and T429 each coordinate L-serine. The segment at 472–512 (KPAPIDQEPSKKQKKQHEGSKKKAKEVTLESQLQNMEVTEA) is disordered. Positions 479-499 (EPSKKQKKQHEGSKKKAKEVT) are enriched in basic and acidic residues. The short motif at 482 to 494 (KKQKKQHEGSKKK) is the Nuclear localization signal element. Positions 500–512 (LESQLQNMEVTEA) are enriched in polar residues.

This sequence belongs to the class-II aminoacyl-tRNA synthetase family. Type-1 seryl-tRNA synthetase subfamily. In terms of assembly, homodimer. The tRNA molecule may bind across the dimer. Interacts with SIRT2. Interacts with METTL6; interaction is required for the tRNA N(3)-methylcytidine methyltransferase activity of METTL6.

The protein localises to the cytoplasm. It is found in the nucleus. It catalyses the reaction tRNA(Ser) + L-serine + ATP = L-seryl-tRNA(Ser) + AMP + diphosphate + H(+). The enzyme catalyses tRNA(Sec) + L-serine + ATP = L-seryl-tRNA(Sec) + AMP + diphosphate + H(+). The protein operates within aminoacyl-tRNA biosynthesis; selenocysteinyl-tRNA(Sec) biosynthesis; L-seryl-tRNA(Sec) from L-serine and tRNA(Sec): step 1/1. Its function is as follows. Catalyzes the attachment of serine to tRNA(Ser) in a two-step reaction: serine is first activated by ATP to form Ser-AMP and then transferred to the acceptor end of tRNA(Ser). Is probably also able to aminoacylate tRNA(Sec) with serine, to form the misacylated tRNA L-seryl-tRNA(Sec), which will be further converted into selenocysteinyl-tRNA(Sec). In the nucleus, binds to the VEGFA core promoter and prevents MYC binding and transcriptional activation by MYC. Recruits SIRT2 to the VEGFA promoter, promoting deacetylation of histone H4 at 'Lys-16' (H4K16). Thereby, inhibits the production of VEGFA and sprouting angiogenesis mediated by VEGFA. This Cricetulus griseus (Chinese hamster) protein is Serine--tRNA ligase, cytoplasmic (SARS1).